Consider the following 153-residue polypeptide: uncharacterized protein (153 aa).

A signal peptide spans 1-19 (MKACLLLFFYFSFICQLHG).

This is an uncharacterized protein from Escherichia coli (strain K12).